The following is a 465-amino-acid chain: Phosphomannomutase/phosphoglucomutase (465 aa).

Catalysis depends on serine 110, which acts as the Phosphoserine intermediate. Residues serine 110, aspartate 244, aspartate 246, and aspartate 248 each coordinate Mg(2+). Substrate contacts are provided by glutamate 327, serine 329, and histidine 331.

Belongs to the phosphohexose mutase family. Monomer. Requires Mg(2+) as cofactor.

The catalysed reaction is alpha-D-mannose 1-phosphate = D-mannose 6-phosphate. It carries out the reaction alpha-D-glucose 1-phosphate = alpha-D-glucose 6-phosphate. It functions in the pathway nucleotide-sugar biosynthesis; GDP-alpha-D-mannose biosynthesis; alpha-D-mannose 1-phosphate from D-fructose 6-phosphate: step 2/2. Its pathway is bacterial outer membrane biogenesis; lipopolysaccharide biosynthesis. In terms of biological role, the phosphomannomutase activity produces a precursor for alginate polymerization. The alginate layer causes a mucoid phenotype and provides a protective barrier against host immune defenses and antibiotics. Also involved in core-LPS biosynthesis due to its phosphoglucomutase activity. Essential for biofilm production. This Pseudomonas syringae pv. tomato (strain ATCC BAA-871 / DC3000) protein is Phosphomannomutase/phosphoglucomutase (algC).